Reading from the N-terminus, the 343-residue chain is Cytoplasmic tRNA 2-thiolation protein 1 (343 aa).

The protein belongs to the TtcA family. CTU1/NCS6/ATPBD3 subfamily.

Its subcellular location is the cytoplasm. It functions in the pathway tRNA modification; 5-methoxycarbonylmethyl-2-thiouridine-tRNA biosynthesis. Its function is as follows. Plays a central role in 2-thiolation of mcm(5)S(2)U at tRNA wobble positions of tRNA(Lys), tRNA(Glu) and tRNA(Gln). Directly binds tRNAs and probably acts by catalyzing adenylation of tRNAs, an intermediate required for 2-thiolation. It is unclear whether it acts as a sulfurtransferase that transfers sulfur from thiocarboxylated URM1 onto the uridine of tRNAs at wobble position. This Drosophila yakuba (Fruit fly) protein is Cytoplasmic tRNA 2-thiolation protein 1.